The sequence spans 294 residues: Cytidine deaminase (294 aa).

2 CMP/dCMP-type deaminase domains span residues 48 to 168 (DEDA…FGPK) and 186 to 294 (LTGD…VLLA). Substrate is bound at residue 89–91 (NME). A Zn(2+)-binding site is contributed by His102. Glu104 serves as the catalytic Proton donor. Zn(2+)-binding residues include Cys129 and Cys132.

The protein belongs to the cytidine and deoxycytidylate deaminase family. Homodimer. Zn(2+) is required as a cofactor.

The catalysed reaction is cytidine + H2O + H(+) = uridine + NH4(+). It catalyses the reaction 2'-deoxycytidine + H2O + H(+) = 2'-deoxyuridine + NH4(+). Its function is as follows. This enzyme scavenges exogenous and endogenous cytidine and 2'-deoxycytidine for UMP synthesis. The polypeptide is Cytidine deaminase (Escherichia coli O139:H28 (strain E24377A / ETEC)).